A 553-amino-acid polypeptide reads, in one-letter code: Protein PNS1 (553 aa).

The disordered stretch occupies residues 1–53 (MFGEGNKPTEPVPAYDAGQDPFQGPNASKNQYQGSAADYNGAPPPPASQPGNQ). The Cytoplasmic segment spans residues 1-94 (MFGEGNKPTE…EDSKPKWNDW (94 aa)). Residues 25–34 (PNASKNQYQG) show a composition bias toward polar residues. Residues 95-115 (PFTIFFAGCVIAFIVVAAITL) form a helical membrane-spanning segment. Residues 116–142 (RAWSQNSSSQGSGVYDGANTGTLTTNS) are Extracellular-facing. An N-linked (GlcNAc...) asparagine glycan is attached at asparagine 121. A helical transmembrane segment spans residues 143-163 (AIMLAISCIIAFVFSIIGIVL). Over 164–169 (ARMFPK) the chain is Cytoplasmic. Residues 170 to 190 (FFIIAGILFNIIAGLATAIMY) traverse the membrane as a helical segment. Residues 191 to 192 (LS) are Extracellular-facing. A helical membrane pass occupies residues 193 to 213 (LKYYSAGIVFLVFTAICALFY). At 214-241 (WRMRHRIPFTVAVLKTVMDVMKSYPQTW) the chain is on the cytoplasmic side. A helical transmembrane segment spans residues 242 to 262 (FVTLIGSIIATAFSILFSAVI). Residues 263-287 (VATYMKYDDKANNPGCSTNGGSCSN) are Extracellular-facing. The chain crosses the membrane as a helical span at residues 288 to 308 (AKLIGLLVLVFFCGYYIAEVI). Residues 309-349 (RNVIHCTVSGIFGAWYYFSKSDQGMPKWPGFGALKRSLTYS) lie on the Cytoplasmic side of the membrane. Residues 350 to 370 (FGSICFGSLIVTIIETLKAVL) form a helical membrane-spanning segment. Residues 371–385 (RLAVDGVMGGGGADN) are Extracellular-facing. A helical transmembrane segment spans residues 386–406 (GWMQCLALIANWIFSFLEWLA). At 407 to 450 (RYFNHYAYVFIALYGKPYLRAAKETWYMLREKGIDALINDNLVN) the chain is on the cytoplasmic side. The chain crosses the membrane as a helical span at residues 451 to 471 (VALSFFTLFTCYITTLFAYLY). Residues 472 to 484 (LRYTDPNYNDNNN) lie on the Extracellular side of the membrane. The chain crosses the membrane as a helical span at residues 485 to 505 (FTPALMAFAFVIAMEICNVIT). The Cytoplasmic portion of the chain corresponds to 506 to 553 (ETIRSGTATFFVALGNDPEVFHLSYPERFDEIFRAYPEVLKKLSHQNV).

The protein belongs to the CTL (choline transporter-like) family.

The protein localises to the cell membrane. Its function is as follows. Probably involved in transport through the plasma membrane. The chain is Protein PNS1 (PNS1) from Kluyveromyces lactis (strain ATCC 8585 / CBS 2359 / DSM 70799 / NBRC 1267 / NRRL Y-1140 / WM37) (Yeast).